Here is a 122-residue protein sequence, read N- to C-terminus: Large ribosomal subunit protein bL12 (122 aa).

It belongs to the bacterial ribosomal protein bL12 family. As to quaternary structure, homodimer. Part of the ribosomal stalk of the 50S ribosomal subunit. Forms a multimeric L10(L12)X complex, where L10 forms an elongated spine to which 2 to 4 L12 dimers bind in a sequential fashion. Binds GTP-bound translation factors.

In terms of biological role, forms part of the ribosomal stalk which helps the ribosome interact with GTP-bound translation factors. Is thus essential for accurate translation. The chain is Large ribosomal subunit protein bL12 from Fusobacterium nucleatum subsp. nucleatum (strain ATCC 25586 / DSM 15643 / BCRC 10681 / CIP 101130 / JCM 8532 / KCTC 2640 / LMG 13131 / VPI 4355).